Consider the following 573-residue polypeptide: 2-succinyl-5-enolpyruvyl-6-hydroxy-3-cyclohexene-1-carboxylate synthase (573 aa).

Belongs to the TPP enzyme family. MenD subfamily. Homodimer. Mg(2+) serves as cofactor. Requires Mn(2+) as cofactor. The cofactor is thiamine diphosphate.

It carries out the reaction isochorismate + 2-oxoglutarate + H(+) = 5-enolpyruvoyl-6-hydroxy-2-succinyl-cyclohex-3-ene-1-carboxylate + CO2. It functions in the pathway quinol/quinone metabolism; 1,4-dihydroxy-2-naphthoate biosynthesis; 1,4-dihydroxy-2-naphthoate from chorismate: step 2/7. Its pathway is quinol/quinone metabolism; menaquinone biosynthesis. In terms of biological role, catalyzes the thiamine diphosphate-dependent decarboxylation of 2-oxoglutarate and the subsequent addition of the resulting succinic semialdehyde-thiamine pyrophosphate anion to isochorismate to yield 2-succinyl-5-enolpyruvyl-6-hydroxy-3-cyclohexene-1-carboxylate (SEPHCHC). The sequence is that of 2-succinyl-5-enolpyruvyl-6-hydroxy-3-cyclohexene-1-carboxylate synthase from Shewanella oneidensis (strain ATCC 700550 / JCM 31522 / CIP 106686 / LMG 19005 / NCIMB 14063 / MR-1).